Reading from the N-terminus, the 318-residue chain is Protein phosphatase 1 regulatory subunit 3C (318 aa).

Positions 84 to 87 match the PP1-binding motif motif; it reads RVVF. Residues 141–263 are interaction with EPM2A; the sequence is PSADYLSFRN…YRIVHVQWKP (123 aa). The region spanning 149–257 is the CBM21 domain; sequence RNHFQKNSVC…NNEGQNYRIV (109 aa).

As to quaternary structure, interacts with PPP1CC catalytic subunit of PP1 and associates with glycogen. Forms complexes with glycogen phosphorylase, glycogen synthase and phosphorylase kinase which is necessary for its regulation of PP1 activity. Also interacts with EPM2A/laforin. Ubiquitinated by NHLRC1/malin in a EPM2A/laforin-dependent manner.

Acts as a glycogen-targeting subunit for PP1 and regulates its activity. Activates glycogen synthase, reduces glycogen phosphorylase activity and limits glycogen breakdown. Dramatically increases basal and insulin-stimulated glycogen synthesis upon overexpression in a variety of cell types. The protein is Protein phosphatase 1 regulatory subunit 3C of Bos taurus (Bovine).